Consider the following 311-residue polypeptide: Dihydroorotate dehydrogenase B (NAD(+)), catalytic subunit (311 aa).

Residues Ser24 and 48–49 each bind FMN; that span reads KA. Substrate is bound by residues Lys48 and 72–76; that span reads NAIGL. 2 residues coordinate FMN: Asn104 and Asn132. Asn132 serves as a coordination point for substrate. The active-site Nucleophile is the Cys135. Residues Lys170 and Ile196 each coordinate FMN. Position 197–198 (197–198) interacts with substrate; that stretch reads NT. Residues Gly222, 248–249, and 270–271 contribute to the FMN site; these read GG and GT.

Belongs to the dihydroorotate dehydrogenase family. Type 1 subfamily. As to quaternary structure, heterotetramer of 2 PyrK and 2 PyrD type B subunits. The cofactor is FMN.

Its subcellular location is the cytoplasm. It carries out the reaction (S)-dihydroorotate + NAD(+) = orotate + NADH + H(+). It functions in the pathway pyrimidine metabolism; UMP biosynthesis via de novo pathway; orotate from (S)-dihydroorotate (NAD(+) route): step 1/1. In terms of biological role, catalyzes the conversion of dihydroorotate to orotate with NAD(+) as electron acceptor. The sequence is that of Dihydroorotate dehydrogenase B (NAD(+)), catalytic subunit (pyrDB) from Lactococcus lactis subsp. lactis (strain IL1403) (Streptococcus lactis).